A 286-amino-acid polypeptide reads, in one-letter code: Isopentenyl-diphosphate Delta-isomerase II (286 aa).

The Nudix hydrolase domain occupies 104–256 (MLHRAFSVFL…GLKLSPWFRL (153 aa)). Active-site residues include C141 and E203.

It belongs to the IPP isomerase type 1 family.

The enzyme catalyses isopentenyl diphosphate = dimethylallyl diphosphate. The protein operates within isoprenoid biosynthesis; dimethylallyl diphosphate biosynthesis; dimethylallyl diphosphate from isopentenyl diphosphate: step 1/1. It participates in porphyrin-containing compound metabolism; chlorophyll biosynthesis. Catalyzes the 1,3-allylic rearrangement of the homoallylic substrate isopentenyl (IPP) to its highly electrophilic allylic isomer, dimethylallyl diphosphate (DMAPP). The sequence is that of Isopentenyl-diphosphate Delta-isomerase II (IPI2) from Clarkia breweri (Fairy fans).